A 645-amino-acid chain; its full sequence is Meiosis induction protein kinase IME2/SME1 (645 aa).

A disordered region spans residues 1 to 24; sequence MVEKRSRQSSSSGSEFSVPPDVDN. The segment covering 8-17 has biased composition (low complexity); it reads QSSSSGSEFS. Residues 38 to 386 form the Protein kinase domain; sequence YQLIEKLGAG…AQELCEMPFF (349 aa). ATP contacts are provided by residues 44–52 and K67; that span reads LGAGSFGCV. The active-site Proton acceptor is D193.

Belongs to the protein kinase superfamily. Ser/Thr protein kinase family.

It carries out the reaction L-seryl-[protein] + ATP = O-phospho-L-seryl-[protein] + ADP + H(+). It catalyses the reaction L-threonyl-[protein] + ATP = O-phospho-L-threonyl-[protein] + ADP + H(+). Protein kinase which is essential for the initiation of meiosis and sporulation. The sequence is that of Meiosis induction protein kinase IME2/SME1 (IME2) from Saccharomyces cerevisiae (strain ATCC 204508 / S288c) (Baker's yeast).